Consider the following 281-residue polypeptide: Undecaprenyl-diphosphatase (281 aa).

The next 7 membrane-spanning stretches (helical) occupy residues 49 to 69 (SANT…AWIF), 92 to 112 (LHIF…DDFI), 116 to 136 (LFSV…MIAA), 152 to 172 (MTYK…WPGF), 196 to 216 (TFIM…ASNI), 224 to 244 (ILFY…SIRL), and 257 to 277 (FAIY…GFGI).

The protein belongs to the UppP family.

The protein resides in the cell membrane. The catalysed reaction is di-trans,octa-cis-undecaprenyl diphosphate + H2O = di-trans,octa-cis-undecaprenyl phosphate + phosphate + H(+). In terms of biological role, catalyzes the dephosphorylation of undecaprenyl diphosphate (UPP). Confers resistance to bacitracin. This is Undecaprenyl-diphosphatase from Macrococcus caseolyticus (strain JCSC5402) (Macrococcoides caseolyticum).